The following is a 338-amino-acid chain: Sorting nexin-15 (338 aa).

The PX domain occupies 1–131; sequence MSRRAKKDDF…EFFRGGEVTR (131 aa). A 1,2-diacyl-sn-glycero-3-phospho-(1D-myo-inositol-3-phosphate)-binding residues include R52, S54, R88, and R97. The residue at position 106 (R106) is an Omega-N-methylarginine. A disordered region spans residues 134–155; sequence EVSRDLQILPPPLIPTPPSDEA. Positions 142 to 151 are enriched in pro residues; that stretch reads LPPPLIPTPP. Phosphoserine is present on residues S202 and S228. The segment at 240-270 is disordered; that stretch reads VQSKRLDQEPWEPGGREEEEAEDGDPAPAYL. Residues 266-338 form the MIT domain; it reads APAYLGQATE…RAETLHAHLP (73 aa).

This sequence belongs to the sorting nexin family. Homodimer. Interacts with SNX1, SNX2 and SNX4.

It is found in the cytoplasm. Its subcellular location is the membrane. It localises to the cytoplasmic vesicle membrane. Functionally, may be involved in several stages of intracellular trafficking. Overexpression of SNX15 disrupts the normal trafficking of proteins from the plasma membrane to recycling endosomes or the TGN. The polypeptide is Sorting nexin-15 (Snx15) (Rattus norvegicus (Rat)).